The primary structure comprises 161 residues: Protein shisa-like-2B (161 aa).

A helical transmembrane segment spans residues 65-85 (IGALIGLGIAALVLLAFVISV). The disordered stretch occupies residues 115–134 (QEGNSNRKSKAPRSNAASNS).

This sequence belongs to the shisa family.

Its subcellular location is the membrane. In Bos taurus (Bovine), this protein is Protein shisa-like-2B (SHISAL2B).